Here is an 887-residue protein sequence, read N- to C-terminus: Alanine--tRNA ligase (887 aa).

Zn(2+) contacts are provided by histidine 564, histidine 568, cysteine 676, and histidine 680.

It belongs to the class-II aminoacyl-tRNA synthetase family. The cofactor is Zn(2+).

The protein resides in the cytoplasm. It carries out the reaction tRNA(Ala) + L-alanine + ATP = L-alanyl-tRNA(Ala) + AMP + diphosphate. In terms of biological role, catalyzes the attachment of alanine to tRNA(Ala) in a two-step reaction: alanine is first activated by ATP to form Ala-AMP and then transferred to the acceptor end of tRNA(Ala). Also edits incorrectly charged Ser-tRNA(Ala) and Gly-tRNA(Ala) via its editing domain. In Rhizobium meliloti (strain 1021) (Ensifer meliloti), this protein is Alanine--tRNA ligase.